Consider the following 241-residue polypeptide: uncharacterized protein (241 aa).

This is an uncharacterized protein from Saccharolobus islandicus (Sulfolobus islandicus).